The following is a 124-amino-acid chain: Small ribosomal subunit protein bS16 (124 aa).

The segment covering 81 to 90 (LKKRPARNNP) has biased composition (basic residues). The tract at residues 81–124 (LKKRPARNNPHKGEPGKKAQERIAAAKQAAEDAAAAAEADSASE) is disordered. Residues 91-101 (HKGEPGKKAQE) are compositionally biased toward basic and acidic residues. Residues 102–124 (RIAAAKQAAEDAAAAAEADSASE) are compositionally biased toward low complexity.

Belongs to the bacterial ribosomal protein bS16 family.

The polypeptide is Small ribosomal subunit protein bS16 (Bartonella tribocorum (strain CIP 105476 / IBS 506)).